The primary structure comprises 137 residues: Cellular retinoic acid-binding protein 1 (137 aa).

The Nuclear localization signal motif lies at 21–31; that stretch reads KALGVNAMLRK. 132–134 lines the all-trans-retinoate pocket; that stretch reads RIY.

The protein belongs to the calycin superfamily. Fatty-acid binding protein (FABP) family.

The protein resides in the cytoplasm. In terms of biological role, cytosolic CRABPs may regulate the access of retinoic acid to the nuclear retinoic acid receptors. The protein is Cellular retinoic acid-binding protein 1 (crabp1) of Hippocampus comes (Tiger tail seahorse).